The primary structure comprises 318 residues: Pheromone-regulated membrane protein 5 (318 aa).

A helical membrane pass occupies residues 78 to 98 (FIVVGGIAGVIFLAILLWWVI). Serine 129 carries the phosphoserine modification. Residues 238 to 247 (TISSSSASSL) show a composition bias toward low complexity. Residues 238 to 318 (TISSSSASSL…HMLEGKEQDE (81 aa)) are disordered. Basic and acidic residues predominate over residues 250-261 (GNEKEVGEDIRK). Positions 276 to 285 (SPESDGSVNR) are enriched in polar residues. Residues serine 279, serine 282, and serine 288 each carry the phosphoserine modification. Residues 309–318 (HMLEGKEQDE) show a composition bias toward basic and acidic residues. A Glycyl lysine isopeptide (Lys-Gly) (interchain with G-Cter in ubiquitin) cross-link involves residue lysine 314.

Belongs to the PRM5 family.

Its subcellular location is the membrane. The protein is Pheromone-regulated membrane protein 5 (PRM5) of Saccharomyces cerevisiae (strain Lalvin EC1118 / Prise de mousse) (Baker's yeast).